The chain runs to 419 residues: Phospho-N-acetylmuramoyl-pentapeptide-transferase (419 aa).

10 helical membrane passes run 22–42 (YVSF…TVIG), 72–92 (TPTM…LLLA), 99–119 (ILLM…DDYI), 135–155 (IIGQ…NPAV), 208–228 (VLFG…FISN), 238–258 (GLAT…AYVS), 278–298 (LTIF…YNAY), 303–323 (FMGD…ALII), 328–348 (LLPI…IQVF), and 396–416 (KITV…IATL).

The protein belongs to the glycosyltransferase 4 family. MraY subfamily. Mg(2+) serves as cofactor.

The protein resides in the cell inner membrane. The catalysed reaction is UDP-N-acetyl-alpha-D-muramoyl-L-alanyl-gamma-D-glutamyl-meso-2,6-diaminopimeloyl-D-alanyl-D-alanine + di-trans,octa-cis-undecaprenyl phosphate = di-trans,octa-cis-undecaprenyl diphospho-N-acetyl-alpha-D-muramoyl-L-alanyl-D-glutamyl-meso-2,6-diaminopimeloyl-D-alanyl-D-alanine + UMP. It participates in cell wall biogenesis; peptidoglycan biosynthesis. In terms of biological role, catalyzes the initial step of the lipid cycle reactions in the biosynthesis of the cell wall peptidoglycan: transfers peptidoglycan precursor phospho-MurNAc-pentapeptide from UDP-MurNAc-pentapeptide onto the lipid carrier undecaprenyl phosphate, yielding undecaprenyl-pyrophosphoryl-MurNAc-pentapeptide, known as lipid I. The polypeptide is Phospho-N-acetylmuramoyl-pentapeptide-transferase (Porphyromonas gingivalis (strain ATCC 33277 / DSM 20709 / CIP 103683 / JCM 12257 / NCTC 11834 / 2561)).